The chain runs to 500 residues: Endonuclease domain-containing 1 protein (500 aa).

A signal peptide spans 1-21 (MGTARWLALGSLFALAGLLEG). A disordered region spans residues 293–323 (ERMVQSQKSSSPLSSTRSKRSTLLPPEASEG). The segment covering 297 to 317 (QSQKSSSPLSSTRSKRSTLLP) has biased composition (low complexity). Lys407 is modified (N6-acetyllysine).

The protein belongs to the DNA/RNA non-specific endonuclease family. As to quaternary structure, interacts with RNF26; this interaction is important to modulate innate immune signaling through the cGAS-STING pathway.

The protein resides in the secreted. Functionally, may act as a DNase and a RNase. Plays a role in the modulation of innate immune signaling through the cGAS-STING pathway by interacting with RNF26. The chain is Endonuclease domain-containing 1 protein (ENDOD1) from Homo sapiens (Human).